The sequence spans 103 residues: Large ribosomal subunit protein bL21 (103 aa).

This sequence belongs to the bacterial ribosomal protein bL21 family. As to quaternary structure, part of the 50S ribosomal subunit. Contacts protein L20.

This protein binds to 23S rRNA in the presence of protein L20. The chain is Large ribosomal subunit protein bL21 from Pectobacterium atrosepticum (strain SCRI 1043 / ATCC BAA-672) (Erwinia carotovora subsp. atroseptica).